Reading from the N-terminus, the 107-residue chain is Flagellar transcriptional regulator FlhD (107 aa).

This sequence belongs to the FlhD family. As to quaternary structure, homodimer; disulfide-linked. Forms a heterohexamer composed of two FlhC and four FlhD subunits. Each FlhC binds a FlhD dimer, forming a heterotrimer, and a hexamer assembles by dimerization of two heterotrimers.

It is found in the cytoplasm. Its function is as follows. Functions in complex with FlhC as a master transcriptional regulator that regulates transcription of several flagellar and non-flagellar operons by binding to their promoter region. Activates expression of class 2 flagellar genes, including fliA, which is a flagellum-specific sigma factor that turns on the class 3 genes. Also regulates genes whose products function in a variety of physiological pathways. This chain is Flagellar transcriptional regulator FlhD, found in Bordetella pertussis (strain Tohama I / ATCC BAA-589 / NCTC 13251).